Here is a 655-residue protein sequence, read N- to C-terminus: Forkhead box protein O1 (655 aa).

Disordered stretches follow at residues 1–63 (MAEA…SASA) and 116–158 (GCLH…SRRN). A Phosphothreonine; by PKB/AKT1 or PKB/AKT2 and SGK1 modification is found at Thr-24. Low complexity predominate over residues 33–63 (SQSNSATSSPAPSGSAAANPDAAAGLPSASA). Pro residues predominate over residues 120–141 (PAPPQPPPPGPLSQHPPVPPAA). The fork-head DNA-binding region spans 159-235 (AWGNLSYADL…VQNEGTGKSS (77 aa)). DNA-binding regions lie at residues 211–218 (NSIRHNLS) and 234–237 (SSWW). Phosphoserine; by STK4/MST1 occurs at positions 212, 218, 234, and 235. A disordered region spans residues 234–344 (SSWWMLNPEG…QDDLGEGDVH (111 aa)). 2 positions are modified to N6-acetyllysine: Lys-245 and Lys-248. Ser-249 is subject to Phosphoserine; by CDK1. Arg-251 and Arg-253 each carry omega-N-methylarginine; by PRMT1. A Nuclear localization signal motif is present at residues 251–253 (RRR). Ser-256 is modified (phosphoserine; by PKB/AKT1 and SGK1). N6-acetyllysine is present on residues Lys-262, Lys-265, and Lys-274. Basic residues predominate over residues 264-275 (AKSRSRAAKKKA). A sufficient for interaction with NLK region spans residues 283–563 (GAGDSPGSQF…RLTQVKTPVQ (281 aa)). Phosphoserine occurs at positions 287 and 298. Residues 309-326 (NWSTFRPRTSSNASTISG) are compositionally biased toward polar residues. The residue at position 319 (Ser-319) is a Phosphoserine; by PKB/AKT1. Position 322 is a phosphoserine; by CK1 and SGK1 (Ser-322). Ser-325 bears the Phosphoserine; by CK1 mark. A Phosphoserine; by DYRK1A modification is found at Ser-329. At Thr-333 the chain carries Phosphothreonine. The required for interaction with RUNX2 stretch occupies residues 363-459 (SEISNPENME…GGMSQYNCAP (97 aa)). Lys-423 carries the post-translational modification N6-acetyllysine. The Required for interaction with SIRT1 motif lies at 462 to 466 (LKELL). Residues 507-534 (YGSQASHNKMMNPSSHTHPGHAQQTSAV) show a composition bias toward polar residues. The disordered stretch occupies residues 507–537 (YGSQASHNKMMNPSSHTHPGHAQQTSAVNGR).

Interacts with LRPPRC. Interacts with RUNX2; the interaction inhibits RUNX2 transcriptional activity and mediates the IGF1/insulin-dependent BGLAP expression in osteoblasts Interacts with PPP2R1A; the interaction regulates the dephosphorylation of FOXO1 at Thr-24 and Ser-256 leading to its nuclear import. Interacts (acetylated form) with PPARG. Interacts with XBP1 isoform 2; this interaction is direct and leads to FOXO1 ubiquitination and degradation via the proteasome pathway. Interacts with NLK. Interacts with SIRT1; the interaction results in the deacetylation of FOXO1 leading to activation of FOXO1-mediated transcription of genes involved in DNA repair and stress resistance. Binds to CDK1. Interacts with the 14-3-3 proteins, YWHAG and YWHAZ; the interactions require insulin-stimulated phosphorylation on Thr-24, promote nuclear exit and loss of transcriptional activity. Interacts with SKP2; the interaction ubiquitinates FOXO1 leading to its proteasomal degradation. The interaction requires the presence of KRIT1. Interacts (via the C-terminal half) with ATF4 (via its DNA-binding domain); the interaction occurs in osteoblasts, regulates glucose homeostasis via suppression of beta-cell proliferation and subsequent decrease in insulin production. Interacts with PRMT1; the interaction methylates FOXO1, prevents PKB/AKT1 phosphorylation and retains FOXO1 in the nucleus. Interacts with EP300 and CREBBP; the interactions acetylate FOXO1. Interacts with SIRT2; the interaction is disrupted in response to oxidative stress or serum deprivation, leading to increased level of acetylated FOXO1, which promotes stress-induced autophagy by stimulating E1-like activating enzyme ATG7. Interacts (acetylated form) with ATG7; the interaction is increased in response to oxidative stress or serum deprivation and promotes the autophagic process leading to cell death. Interacts (via the Fork-head domain) with CEBPA; the interaction increases when FOXO1 is deacetylated. Interacts with WDFY2. Forms a complex with WDFY2 and AKT1. Interacts with CRY1. Interacts with PPIA/CYPA; the interaction promotes FOXO1 dephosphorylation, nuclear accumulation and transcriptional activity. Interacts with TOX4; FOXO1 is required for full induction of TOX4-dependent activity and the interaction is inhibited by insulin. Interacts (when phosphorylated on Ser-256) with STUB1/CHIP. Phosphorylation by NLK promotes nuclear export and inhibits the transcriptional activity. In response to growth factors, phosphorylation on Thr-24, Ser-256 and Ser-322 by PKB/AKT1 promotes nuclear export and inactivation of transactivational activity. Phosphorylation on Thr-24 is required for binding 14-3-3 proteins. Phosphorylation of Ser-256 decreases DNA-binding activity and promotes the phosphorylation of Thr-24 and Ser-319, permitting phosphorylation of Ser-322 and Ser-325, probably by CDK1, leading to nuclear exclusion and loss of function. Stress signals, such as response to oxygen or nitric oxide, attenuate the PKB/AKT1-mediated phosphorylation leading to nuclear retention. Phosphorylation of Ser-329 is independent of IGF1 and leads to reduced function. Dephosphorylated on Thr-24 and Ser-256 by PP2A in beta-cells under oxidative stress leading to nuclear retention. Phosphorylation of Ser-249 by CDK1 disrupts binding of 14-3-3 proteins leading to nuclear accumulation and has no effect on DNA-binding nor transcriptional activity. Phosphorylation by STK4/MST1 on Ser-212, upon oxidative stress, inhibits binding to 14-3-3 proteins and nuclear export. PPIA/CYPA promotes its dephosphorylation on Ser-256. Post-translationally, ubiquitinated by SKP2. Ubiquitination leads to proteasomal degradation. Ubiquitinated by STUB1/CHIP; when Ser-256 is phosphorylated. In terms of processing, methylation inhibits AKT1-mediated phosphorylation at Ser-256 and is increased by oxidative stress. Acetylated. Acetylation at Lys-262, Lys-265 and Lys-274 are necessary for autophagic cell death induction. Deacetylated by SIRT2 in response to oxidative stress or serum deprivation, thereby negatively regulating FOXO1-mediated autophagic cell death. Once in the nucleus, acetylated by CREBBP/EP300. Acetylation diminishes the interaction with target DNA and attenuates the transcriptional activity. It increases the phosphorylation at Ser-256. Deacetylation by SIRT1 results in reactivation of the transcriptional activity. Oxidative stress by hydrogen peroxide treatment appears to promote deacetylation and uncoupling of insulin-induced phosphorylation. By contrast, resveratrol acts independently of acetylation. Acetylated at Lys-423, promoting its localization to the nucleus and transcription factor activity. Deacetylation at Lys-423 by SIRT6, promotes its translocation into the cytoplasm, preventing its transcription factor activity. Deacetylation and subsequent inhibition by SIRT6 has different effects depending on cell types: it inhibits gluconeogenesis in hepatocytes, promotes glucose sensing in pancreatic beta-cells and regulates lipid catabolism in brown adipocytes. As to expression, expressed in umbilical endothelial cells (at protein level). Abundantly expressed in skeletal muscle and ovary, with lower expression in the heart, placenta, lung, liver, pancreas, spleen, testis and small intestine. Weakly expressed in the brain, thymus, prostate and mucosal lining of the colon.

The protein localises to the cytoplasm. It is found in the nucleus. Functionally, transcription factor that is the main target of insulin signaling and regulates metabolic homeostasis in response to oxidative stress. Binds to the insulin response element (IRE) with consensus sequence 5'-TT[G/A]TTTTG-3' and the related Daf-16 family binding element (DBE) with consensus sequence 5'-TT[G/A]TTTAC-3'. Activity suppressed by insulin. Main regulator of redox balance and osteoblast numbers and controls bone mass. Orchestrates the endocrine function of the skeleton in regulating glucose metabolism. Also acts as a key regulator of chondrogenic commitment of skeletal progenitor cells in response to lipid availability: when lipids levels are low, translocates to the nucleus and promotes expression of SOX9, which induces chondrogenic commitment and suppresses fatty acid oxidation. Acts synergistically with ATF4 to suppress osteocalcin/BGLAP activity, increasing glucose levels and triggering glucose intolerance and insulin insensitivity. Also suppresses the transcriptional activity of RUNX2, an upstream activator of osteocalcin/BGLAP. Acts as an inhibitor of glucose sensing in pancreatic beta cells by acting as a transcription repressor and suppressing expression of PDX1. In hepatocytes, promotes gluconeogenesis by acting together with PPARGC1A and CEBPA to activate the expression of genes such as IGFBP1, G6PC1 and PCK1. Also promotes gluconeogenesis by directly promoting expression of PPARGC1A and G6PC1. Important regulator of cell death acting downstream of CDK1, PKB/AKT1 and STK4/MST1. Promotes neural cell death. Mediates insulin action on adipose tissue. Regulates the expression of adipogenic genes such as PPARG during preadipocyte differentiation and, adipocyte size and adipose tissue-specific gene expression in response to excessive calorie intake. Regulates the transcriptional activity of GADD45A and repair of nitric oxide-damaged DNA in beta-cells. Required for the autophagic cell death induction in response to starvation or oxidative stress in a transcription-independent manner. Mediates the function of MLIP in cardiomyocytes hypertrophy and cardiac remodeling. Positive regulator of apoptosis in cardiac smooth muscle cells as a result of its transcriptional activation of pro-apoptotic genes. Regulates endothelial cell (EC) viability and apoptosis in a PPIA/CYPA-dependent manner via transcription of CCL2 and BCL2L11 which are involved in EC chemotaxis and apoptosis. In Homo sapiens (Human), this protein is Forkhead box protein O1.